The primary structure comprises 317 residues: Olfactory receptor 5AP2 (317 aa).

At 1–32 (MVRSGKGIQNKNATEVTEFILLGLSDNPDLQG) the chain is on the extracellular side. The N-linked (GlcNAc...) asparagine glycan is linked to Asn-12. Residues 33-53 (VLFALFLIIYTMTLVGNLGMM) traverse the membrane as a helical segment. At 54-61 (ALIKIDRS) the chain is on the cytoplasmic side. The helical transmembrane segment at 62-82 (LHTPMYFFLSSLSFVDASYSS) threads the bilayer. Residues 83–106 (SVTPKMLVNLMAEDKSISFNGCAT) are Extracellular-facing. A disulfide bridge links Cys-104 with Cys-196. The helical transmembrane segment at 107–127 (QFFFFGSFLGTECFLLAMMAY) threads the bilayer. Topologically, residues 128 to 140 (DRYAAIWNPLLYP) are cytoplasmic. Residues 141 to 161 (VLMSGRICFMLVSTSFLAGFG) form a helical membrane-spanning segment. Residues 162–203 (NAAIHTGMTFRLSFCGSNKINHFYCDTPPLLKLSCSDTHING) are Extracellular-facing. The helical transmembrane segment at 204 to 224 (IVIMAFSSFNVISCVLIVLIS) threads the bilayer. Topologically, residues 225–244 (YLCILIAILKMPSAEGRHKA) are cytoplasmic. A helical membrane pass occupies residues 245–265 (FSTCASHLMAVTIFFGTILFM). Residues 266–278 (YLRPTSSYSMEQD) lie on the Extracellular side of the membrane. The helical transmembrane segment at 279-299 (KVVSVFYTVVIPMLNPLIYSL) threads the bilayer. Over 300-317 (KNKDVKKAVKKILHNYVV) the chain is Cytoplasmic.

This sequence belongs to the G-protein coupled receptor 1 family.

The protein localises to the cell membrane. Odorant receptor. The protein is Olfactory receptor 5AP2 of Mus musculus (Mouse).